The chain runs to 151 residues: Probable chemoreceptor glutamine deamidase CheD (151 aa).

This sequence belongs to the CheD family.

The catalysed reaction is L-glutaminyl-[protein] + H2O = L-glutamyl-[protein] + NH4(+). In terms of biological role, probably deamidates glutamine residues to glutamate on methyl-accepting chemotaxis receptors (MCPs), playing an important role in chemotaxis. The protein is Probable chemoreceptor glutamine deamidase CheD of Methanosarcina barkeri (strain Fusaro / DSM 804).